We begin with the raw amino-acid sequence, 141 residues long: Large ribosomal subunit protein uL16 (141 aa).

This sequence belongs to the universal ribosomal protein uL16 family. In terms of assembly, part of the 50S ribosomal subunit.

In terms of biological role, binds 23S rRNA and is also seen to make contacts with the A and possibly P site tRNAs. The protein is Large ribosomal subunit protein uL16 of Thermus thermophilus (strain ATCC BAA-163 / DSM 7039 / HB27).